The sequence spans 551 residues: Membrane protein insertase YidC (551 aa).

The helical transmembrane segment at 3–23 threads the bilayer; the sequence is ANHIRILLLVTIAIMFISLMG. Residues 33-47 show a composition bias toward polar residues; that stretch reads NTKQQTSATQNNSHY. The segment at 33–59 is disordered; it reads NTKQQTSATQNNSHYDNADSSTNTDVT. Positions 50–59 are enriched in low complexity; sequence ADSSTNTDVT. Transmembrane regions (helical) follow at residues 361–381, 431–451, and 504–524; these read LVGN…LIFY, LSGC…YWVL, and VMMF…SGLV.

The protein belongs to the OXA1/ALB3/YidC family. Type 1 subfamily. As to quaternary structure, interacts with the Sec translocase complex via SecD. Specifically interacts with transmembrane segments of nascent integral membrane proteins during membrane integration.

It localises to the cell inner membrane. Required for the insertion and/or proper folding and/or complex formation of integral membrane proteins into the membrane. Involved in integration of membrane proteins that insert both dependently and independently of the Sec translocase complex, as well as at least some lipoproteins. Aids folding of multispanning membrane proteins. The protein is Membrane protein insertase YidC of Francisella tularensis subsp. tularensis (strain SCHU S4 / Schu 4).